We begin with the raw amino-acid sequence, 103 residues long: Probable protease inhibitor Egf0.4b (103 aa).

The N-terminal stretch at 1–22 (MMSEKFALVLLVACIAFIGIET) is a signal peptide. In terms of domain architecture, TIL spans 35–87 (CGENEAYDSMRRGCEERCDDHNPTFCFKFTTVCWCEKGYVRDKSDTCIKVEDC).

This sequence belongs to the polydnaviridae EGF-like motif protein family.

The protein is Probable protease inhibitor Egf0.4b (O11) of Microplitis demolitor bracovirus (isolate Webb) (MdBV).